A 233-amino-acid chain; its full sequence is UPF0173 metal-dependent hydrolase Acid345_3437 (233 aa).

It belongs to the UPF0173 family.

In Koribacter versatilis (strain Ellin345), this protein is UPF0173 metal-dependent hydrolase Acid345_3437.